We begin with the raw amino-acid sequence, 625 residues long: Probable potassium transport system protein Kup 2 (625 aa).

Helical transmembrane passes span L15–F35, I52–V72, G98–L118, L134–F154, I164–F184, I203–V223, W246–L266, F284–I304, V336–F356, A365–A385, F394–I414, and L417–T437.

This sequence belongs to the HAK/KUP transporter (TC 2.A.72) family.

It is found in the cell inner membrane. It catalyses the reaction K(+)(in) + H(+)(in) = K(+)(out) + H(+)(out). Functionally, transport of potassium into the cell. Likely operates as a K(+):H(+) symporter. This chain is Probable potassium transport system protein Kup 2, found in Legionella pneumophila subsp. pneumophila (strain Philadelphia 1 / ATCC 33152 / DSM 7513).